The following is a 156-amino-acid chain: AP-1 complex subunit sigma-1 (156 aa).

Belongs to the adaptor complexes small subunit family. In terms of assembly, adapter protein complex 1 (AP-1) is a heterotetramer composed of two large adaptins (gamma-type subunit APL4 and beta-type subunit APL2), a medium adaptin (mu-type subunit APM1) and a small adaptin (sigma-type subunit APS1). AP-1 interacts with clathrin. Also a component of the AP-1R complex composed of at least APM2, APL4 and APS1.

It localises to the cytoplasm. It is found in the nucleus. Its subcellular location is the cytoplasmic vesicle. The protein localises to the clathrin-coated vesicle membrane. The protein resides in the endosome. It localises to the golgi apparatus. Functionally, component of the adapter complexes which link clathrin to receptors in coated vesicles. Clathrin-associated protein complexes are believed to interact with the cytoplasmic tails of membrane proteins, leading to their selection and concentration. AP19 is probably a subunit of the Golgi membrane adapter. Component of the AP-1-related (AP-1R) complex, an adapter protein complex that mediates sorting of cargo SNARE SNC1. In contrast to the APM1-containing AP-1 complex, AP-1R is incapable of sorting CHS3. This chain is AP-1 complex subunit sigma-1 (APS1), found in Saccharomyces cerevisiae (strain ATCC 204508 / S288c) (Baker's yeast).